The following is a 582-amino-acid chain: ATP-dependent lipid A-core flippase (582 aa).

5 helical membrane passes run 16-36, 63-83, 153-173, 253-273, and 275-295; these read LWPTIAPFKAGLIVAGVALIL, VLVWMPLVVIGLMILRGITSY, IIGLFIMMFYYSWQLSIILIV, PIIQLIASLALAFVLYAASFP, and VMDNLTAGTITVVFSSMIALM. One can recognise an ABC transmembrane type-1 domain in the interval 28–310; it reads IVAGVALILN…LTNVNAQFQR (283 aa). Residues 342 to 578 enclose the ABC transporter domain; that stretch reads VEFRNVTFTY…RGVYAQLHKM (237 aa). 376-383 contributes to the ATP binding site; the sequence is GRSGSGKS.

This sequence belongs to the ABC transporter superfamily. Lipid exporter (TC 3.A.1.106) family. Homodimer.

The protein localises to the cell inner membrane. It catalyses the reaction ATP + H2O + lipid A-core oligosaccharideSide 1 = ADP + phosphate + lipid A-core oligosaccharideSide 2.. Its function is as follows. Involved in lipopolysaccharide (LPS) biosynthesis. Translocates lipid A-core from the inner to the outer leaflet of the inner membrane. Transmembrane domains (TMD) form a pore in the inner membrane and the ATP-binding domain (NBD) is responsible for energy generation. The polypeptide is ATP-dependent lipid A-core flippase (Shigella sonnei (strain Ss046)).